The following is a 613-amino-acid chain: Methionine--tRNA ligase (613 aa).

The short motif at 15-25 (PYANGPRHIGH) is the 'HIGH' region element. Zn(2+) contacts are provided by cysteine 147, cysteine 150, cysteine 160, and cysteine 163. A 'KMSKS' region motif is present at residues 351-355 (KFSSS). Serine 354 lines the ATP pocket.

Belongs to the class-I aminoacyl-tRNA synthetase family. MetG type 1 subfamily. In terms of assembly, monomer. Requires Zn(2+) as cofactor.

The protein localises to the cytoplasm. The enzyme catalyses tRNA(Met) + L-methionine + ATP = L-methionyl-tRNA(Met) + AMP + diphosphate. Is required not only for elongation of protein synthesis but also for the initiation of all mRNA translation through initiator tRNA(fMet) aminoacylation. The polypeptide is Methionine--tRNA ligase (Corynebacterium efficiens (strain DSM 44549 / YS-314 / AJ 12310 / JCM 11189 / NBRC 100395)).